The sequence spans 384 residues: Glutamate 5-kinase (384 aa).

Lys24 lines the ATP pocket. Residues Ser64, Asp149, and Asn161 each contribute to the substrate site. Residues 181–182 and 223–229 contribute to the ATP site; these read TD and TGGMRTK. The 83-residue stretch at 288–370 folds into the PUA domain; sequence PGAILIDAGA…RDIQPLLGYT (83 aa).

The protein belongs to the glutamate 5-kinase family.

Its subcellular location is the cytoplasm. The enzyme catalyses L-glutamate + ATP = L-glutamyl 5-phosphate + ADP. It functions in the pathway amino-acid biosynthesis; L-proline biosynthesis; L-glutamate 5-semialdehyde from L-glutamate: step 1/2. Catalyzes the transfer of a phosphate group to glutamate to form L-glutamate 5-phosphate. The sequence is that of Glutamate 5-kinase from Xylella fastidiosa (strain 9a5c).